We begin with the raw amino-acid sequence, 1024 residues long: Multidrug resistance protein MdtC (1024 aa).

A run of 12 helical transmembrane segments spans residues 12 to 32 (VATT…FSLL), 333 to 353 (EVER…FLFL), 360 to 380 (LIPA…MYLC), 387 to 407 (LSLM…IVVL), 431 to 451 (VGFT…PLLL), 463 to 483 (FAVT…TLTP), 528 to 548 (WVMV…ISIP), 853 to 873 (LWLI…LYES), 875 to 895 (VHPL…LLAL), 897 to 917 (LFDA…IGIV), 953 to 973 (PILM…ISSG), and 984 to 1004 (ITIV…TPVV).

This sequence belongs to the resistance-nodulation-cell division (RND) (TC 2.A.6) family. MdtC subfamily. As to quaternary structure, part of a tripartite efflux system composed of MdtA, MdtB and MdtC. MdtC forms a heteromultimer with MdtB.

It is found in the cell inner membrane. This chain is Multidrug resistance protein MdtC, found in Yersinia enterocolitica serotype O:8 / biotype 1B (strain NCTC 13174 / 8081).